The primary structure comprises 98 residues: MALTKADLAENLFETLGYSKRDAKETVEVFFEEVRKALENGEQVKLSGFGNFDLREKNERPGRNPKTGEDIPISARRVVTFRPGQKLKARVENIKIEK.

Positions 53–69 (DLREKNERPGRNPKTGE) are enriched in basic and acidic residues. The interval 53-72 (DLREKNERPGRNPKTGEDIP) is disordered.

This sequence belongs to the bacterial histone-like protein family. In terms of assembly, heterodimer of an alpha and a beta chain.

Functionally, this protein is one of the two subunits of integration host factor, a specific DNA-binding protein that functions in genetic recombination as well as in transcriptional and translational control. This chain is Integration host factor subunit alpha, found in Vibrio atlanticus (strain LGP32) (Vibrio splendidus (strain Mel32)).